The primary structure comprises 689 residues: MTTQNFLAEIGTEELPPKALKKLATAFAENVEAELNQAGLSFDKVEWFAAPRRLAVKVLGLATAQPSKEVEKRGPAVSAAFDAEGKPTKAAEGWAKGCGITVEQAERIATDKGEWLVHRAVIEGQPTKNLLVGIISQALAKLPIPKTMRWGDKTEQFVRPVHTVTLLLGDELIEGEILGVASGTTVRGHRFLGEREFQISHADQYPALLKEKGSVVADFNERKALILAKAQEKATALGGVADIEEDLLDEVTSLVEYPNVLAAKFEERFLAVPAEALVYTMKGDQKYFPIYDKDGKLLPHFIFVSNINPEDPSKIIEGNEKVVRPRLTDAEFFFKTDLKQRLEDQLPRLETVLFQQQLGTLRDKTARIEQLAGEIAKQIGADETKAKRAGLLSKCDLMTNMVFEFTDTQGVMGMHYARHDGEDEEVAVALNEQYMPRFAGDELPKSLVASSVALADKFDTLTGIFGIGQAPKGSADPFALRRAALGALRIIVEKNLPLDLSDLVATSAKLFGDKLTNSNVVEEVVDFMLGRFRAWYQDEGIAVDVIQAVLARRPTRPADFDARVRAVSHFRTLDSAEALAAANKRVSNILAKVEGKISSEIDRTLLVEAEEKALAEQVITLQAELVPLFEKGEYQTALDRLAGLREVVDNFFDKVMVNAEDPKLRQNRQAILNNLRNLFLQVADISLLQ.

Belongs to the class-II aminoacyl-tRNA synthetase family. As to quaternary structure, tetramer of two alpha and two beta subunits.

The protein localises to the cytoplasm. It catalyses the reaction tRNA(Gly) + glycine + ATP = glycyl-tRNA(Gly) + AMP + diphosphate. The sequence is that of Glycine--tRNA ligase beta subunit from Glaesserella parasuis serovar 5 (strain SH0165) (Haemophilus parasuis).